Consider the following 268-residue polypeptide: MRQKPIYVEIEMKSDLDTLWEYTQNPSLHKEWDLRFSNITYLNSQPCEKQKFLYETRVGFGLKVSGTGETVGVFNKCSSERSSSLAFGSDHPLSLIRHGSGYWKYIQRENGKMTFLTQYQYKTAYGLLGRWIDRLLFRPLLGWATAWSFDALRLWVEQNKHPKRFIRSAIIYVFMCLFFSLFWFYQGFAGVKTSILTGTAEIGLAILWLLPLKRKWIIHGVQACIFAGFACLGSEIFMWVLLSVFSAASGALSLQLPSARRTKRKRKK.

A run of 3 helical transmembrane segments spans residues 169-189, 190-210, and 225-245; these read AIIYVFMCLFFSLFWFYQGFA, GVKTSILTGTAEIGLAILWLL, and IFAGFACLGSEIFMWVLLSVF.

The protein resides in the cell membrane. This is an uncharacterized protein from Bacillus subtilis (strain 168).